We begin with the raw amino-acid sequence, 237 residues long: MRPSKRAPDELRKVTLEKGVARYAEGSCLVTFGETKVLCTASLEERGPPWLRGSGKGWVTAEYAMLPRATHERNRREVTAGKPSGRTQEIQRLIGRSLRAVVNLPAIGERQIVVDCDVLQADGGTRTASITGAWVALHECFTWMRGRSIISVDPMRDHVAAISCGIHKGIPILDLDYDEDSAADTDANFVITGSGGIVEVQGTAEIAPFSEEQFLGLLRLAKAGVAQLVALQKQAVG.

Residues arginine 86 and 124-126 (GTR) each bind phosphate.

It belongs to the RNase PH family. Homohexameric ring arranged as a trimer of dimers.

It catalyses the reaction tRNA(n+1) + phosphate = tRNA(n) + a ribonucleoside 5'-diphosphate. In terms of biological role, phosphorolytic 3'-5' exoribonuclease that plays an important role in tRNA 3'-end maturation. Removes nucleotide residues following the 3'-CCA terminus of tRNAs; can also add nucleotides to the ends of RNA molecules by using nucleoside diphosphates as substrates, but this may not be physiologically important. Probably plays a role in initiation of 16S rRNA degradation (leading to ribosome degradation) during starvation. This is Ribonuclease PH from Methylobacterium sp. (strain 4-46).